The primary structure comprises 730 residues: Nitrogen fixation protein FixI (730 aa).

At 1–101 (MHVTRDFSHY…AEVAEVAESR (101 aa)) the chain is on the cytoplasmic side. An HMA domain is found at 19–85 (KHIDLAVEGV…RLEELGYKAY (67 aa)). The a metal cation site is built by Cys30 and Cys33. A helical membrane pass occupies residues 102–123 (FLLRCLGVAAFATMNVMMLSIP). The Extracellular segment spans residues 124 to 138 (VWSGNVSDMLPEQRD). A helical transmembrane segment spans residues 139–162 (FFHWLSALIALPAAAYAGQPFFRS). The Cytoplasmic segment spans residues 163–168 (AWRALS). The chain crosses the membrane as a helical span at residues 169–190 (AKTTNMDVPISIGVILALGMSV). Topologically, residues 191–202 (VETIHHAEHAYF) are extracellular. A helical transmembrane segment spans residues 203–223 (DAAIMLLTFLLVGRFLDQNMR). Residues 224–352 (RRTRAVAGNL…RSRYMRLADR (129 aa)) are Cytoplasmic-facing. The chain crosses the membrane as a helical span at residues 353 to 375 (ASRLYAPVVHATALITILGWVIA). Topologically, residues 376 to 382 (GASWHDA) are extracellular. The helical transmembrane segment at 383–400 (IVTGVAVLIITCPCALGL) threads the bilayer. Residues 401–676 (AIPTVQTVAS…DSARKALHLM (276 aa)) lie on the Cytoplasmic side of the membrane. Asp438 (4-aspartylphosphate intermediate) is an active-site residue. The Mg(2+) site is built by Asp622 and Asp626. A helical membrane pass occupies residues 677–696 (RQNLWLAIGYNVLAVPVAIS). Over 697–701 (GVVTP) the chain is Extracellular. The helical transmembrane segment at 702-720 (LIAAAAMSGSSILVMLNSL) threads the bilayer. Topologically, residues 721–730 (RARSDSREIV) are cytoplasmic.

It belongs to the cation transport ATPase (P-type) (TC 3.A.3) family. Type IB subfamily.

The protein resides in the cell membrane. It catalyses the reaction ATP + H2O = ADP + phosphate + H(+). Functionally, fixI is a pump of a specific cation involved in symbiotic nitrogen fixation. The four proteins FixG, FixH, FixI, and FixS may participate in a membrane-bound complex coupling the FixI cation pump with a redox process catalyzed by FixG. This is Nitrogen fixation protein FixI (fixI) from Bradyrhizobium diazoefficiens (strain JCM 10833 / BCRC 13528 / IAM 13628 / NBRC 14792 / USDA 110).